Here is a 277-residue protein sequence, read N- to C-terminus: Omega-amidase NIT2 (277 aa).

One can recognise a CN hydrolase domain in the interval 4 to 248 (FRLAVVQLHV…ESVVYADIDL (245 aa)). Catalysis depends on Glu43, which acts as the Proton acceptor. The active-site Proton donor is the Lys112. The Nucleophile role is filled by Cys153.

This sequence belongs to the carbon-nitrogen hydrolase superfamily. NIT1/NIT2 family. As to quaternary structure, homodimer.

Its subcellular location is the cytoplasm. It carries out the reaction 2-oxoglutaramate + H2O = 2-oxoglutarate + NH4(+). The catalysed reaction is 2-oxosuccinamate + H2O = oxaloacetate + NH4(+). Its function is as follows. Has omega-amidase activity. The role of omega-amidase is to remove potentially toxic intermediates by converting 2-oxoglutaramate and 2-oxosuccinamate to biologically useful 2-oxoglutarate and oxaloacetate, respectively. The protein is Omega-amidase NIT2 (nit2) of Danio rerio (Zebrafish).